The primary structure comprises 201 residues: Phospholipase A2 inhibitor PIP (201 aa).

The first 19 residues, 1 to 19, serve as a signal peptide directing secretion; it reads MKSLQTICLLFIFIARGTS. Intrachain disulfides connect cysteine 22–cysteine 46, cysteine 25–cysteine 32, cysteine 39–cysteine 67, cysteine 73–cysteine 94, cysteine 95–cysteine 100, cysteine 118–cysteine 143, cysteine 136–cysteine 165, and cysteine 169–cysteine 191. Asparagine 157 is a glycosylation site (N-linked (GlcNAc...) asparagine).

As to quaternary structure, homohexamer. In terms of processing, glycosylated. Expressed by the liver.

The protein localises to the secreted. Functionally, inhibits the enzymatic activity of phospholipase A2 (PA2). Binds to the major PLA2 toxin of D.russelli siamensis (Daboiatoxin, AC Q7T2R1, and AC Q7T3T5) at 1-2-fold molar excess of inhibitor to toxin. It exhibits broad spectra in neutralizing the toxicity of various snake venoms and toxins and inhibits the formation of edema in mice. May bind to PLA2 through its proline-rich hydrophobic core region. This Malayopython reticulatus (Reticulate python) protein is Phospholipase A2 inhibitor PIP.